The chain runs to 245 residues: Derlin-1 (245 aa).

Topologically, residues 1–5 are cytoplasmic; it reads MDLEN. The chain crosses the membrane as a helical span at residues 6–26; it reads FLLGIPIVTRYWFLASTIIPL. At 27–57 the chain is on the lumenal side; sequence LGRFGFINVQWMFLQWDLVVNKFQFWRPLTA. Residues 58-78 form a helical membrane-spanning segment; that stretch reads LIYYPVTPQTGFHWLMMCYFL. At 79–100 the chain is on the cytoplasmic side; sequence YNYSKALESETYRGRSADYLFM. A helical transmembrane segment spans residues 101–121; the sequence is LIFNWFFCSGLCMALDIYFLL. Residues 122-166 are Lumenal-facing; it reads EPMVISVLYVWCQVNKDTIVSFWFGMRFPARYLPWVLWGFNAVLR. The helical transmembrane segment at 167–187 threads the bilayer; sequence GGGTNELVGILVGHAYFFVAL. Topologically, residues 188–245 are cytoplasmic; sequence KYPDEYGVDLISTPEFLHRLIPDEDGGIHGQDGNIRGARQQPRGHQWPGGVGARLGGN. The interval 218–245 is disordered; the sequence is QDGNIRGARQQPRGHQWPGGVGARLGGN. Residues 234 to 245 show a composition bias toward gly residues; it reads WPGGVGARLGGN.

The protein belongs to the derlin family.

It is found in the endoplasmic reticulum membrane. In terms of biological role, specifically required for the degradation process of misfolded endoplasmic reticulum (ER) luminal proteins. Participates in the transfer of misfolded proteins from the ER to the cytosol, where they are destroyed by the proteasome in a ubiquitin-dependent manner. The chain is Derlin-1 from Caenorhabditis elegans.